The chain runs to 384 residues: 8-amino-7-oxononanoate synthase (384 aa).

Arginine 23 contributes to the substrate binding site. Residue 110–111 (GF) participates in pyridoxal 5'-phosphate binding. Substrate is bound at residue histidine 135. Residues serine 179, histidine 206, and threonine 232 each contribute to the pyridoxal 5'-phosphate site. Position 235 is an N6-(pyridoxal phosphate)lysine (lysine 235). A substrate-binding site is contributed by threonine 348.

The protein belongs to the class-II pyridoxal-phosphate-dependent aminotransferase family. BioF subfamily. Homodimer. Requires pyridoxal 5'-phosphate as cofactor.

The enzyme catalyses 6-carboxyhexanoyl-[ACP] + L-alanine + H(+) = (8S)-8-amino-7-oxononanoate + holo-[ACP] + CO2. The protein operates within cofactor biosynthesis; biotin biosynthesis. In terms of biological role, catalyzes the decarboxylative condensation of pimeloyl-[acyl-carrier protein] and L-alanine to produce 8-amino-7-oxononanoate (AON), [acyl-carrier protein], and carbon dioxide. This chain is 8-amino-7-oxononanoate synthase, found in Vibrio cholerae serotype O1 (strain ATCC 39315 / El Tor Inaba N16961).